The following is a 289-amino-acid chain: Diaminopimelate epimerase (289 aa).

Residues Asn13, Gln47, and Asn67 each coordinate substrate. The active-site Proton donor is the Cys76. Substrate is bound by residues 77–78 (GN), Asn167, Asn200, and 218–219 (ER). Catalysis depends on Cys227, which acts as the Proton acceptor. 228–229 (GT) contacts substrate.

The protein belongs to the diaminopimelate epimerase family. As to quaternary structure, homodimer.

The protein localises to the cytoplasm. It carries out the reaction (2S,6S)-2,6-diaminopimelate = meso-2,6-diaminopimelate. The protein operates within amino-acid biosynthesis; L-lysine biosynthesis via DAP pathway; DL-2,6-diaminopimelate from LL-2,6-diaminopimelate: step 1/1. Catalyzes the stereoinversion of LL-2,6-diaminopimelate (L,L-DAP) to meso-diaminopimelate (meso-DAP), a precursor of L-lysine and an essential component of the bacterial peptidoglycan. This is Diaminopimelate epimerase from Burkholderia thailandensis (strain ATCC 700388 / DSM 13276 / CCUG 48851 / CIP 106301 / E264).